A 305-amino-acid polypeptide reads, in one-letter code: Non-homologous end joining protein Ku (305 aa).

One can recognise a Ku domain in the interval 16–202 (SLVSFGISLI…KVDPEQLSLA (187 aa)). Positions 263–305 (GEENGRKKSVSGAQHRSRRKSKGEQKLKVVRSGSSSDKRRKSA) are disordered.

It belongs to the prokaryotic Ku family. Homodimer. Interacts with LigD.

Its function is as follows. With LigD forms a non-homologous end joining (NHEJ) DNA repair enzyme, which repairs dsDNA breaks with reduced fidelity. Binds linear dsDNA with 5'- and 3'- overhangs but not closed circular dsDNA nor ssDNA. Recruits and stimulates the ligase activity of LigD. The protein is Non-homologous end joining protein Ku of Acidobacterium capsulatum (strain ATCC 51196 / DSM 11244 / BCRC 80197 / JCM 7670 / NBRC 15755 / NCIMB 13165 / 161).